We begin with the raw amino-acid sequence, 138 residues long: Putative pre-16S rRNA nuclease (138 aa).

The protein belongs to the YqgF nuclease family.

The protein resides in the cytoplasm. In terms of biological role, could be a nuclease involved in processing of the 5'-end of pre-16S rRNA. This chain is Putative pre-16S rRNA nuclease, found in Carboxydothermus hydrogenoformans (strain ATCC BAA-161 / DSM 6008 / Z-2901).